Reading from the N-terminus, the 339-residue chain is Serine/threonine-protein kinase pdik1l-B (339 aa).

One can recognise a Protein kinase domain in the interval 8-332; the sequence is YDLIREVGRG…LELKLIQIAF (325 aa). ATP is bound by residues 14–22 and K37; that span reads VGRGSYGLV. The active-site Proton acceptor is D164.

This sequence belongs to the protein kinase superfamily. Ser/Thr protein kinase family.

It is found in the nucleus. It carries out the reaction L-seryl-[protein] + ATP = O-phospho-L-seryl-[protein] + ADP + H(+). The catalysed reaction is L-threonyl-[protein] + ATP = O-phospho-L-threonyl-[protein] + ADP + H(+). The chain is Serine/threonine-protein kinase pdik1l-B (pdik1-b) from Xenopus laevis (African clawed frog).